A 404-amino-acid polypeptide reads, in one-letter code: Imidazolonepropionase (404 aa).

Residues His-73 and His-75 each contribute to the Fe(3+) site. His-73 and His-75 together coordinate Zn(2+). Positions 82, 145, and 178 each coordinate 4-imidazolone-5-propanoate. Tyr-145 is an N-formimidoyl-L-glutamate binding site. A Fe(3+)-binding site is contributed by His-243. A Zn(2+)-binding site is contributed by His-243. Gln-246 is a 4-imidazolone-5-propanoate binding site. Asp-318 is a binding site for Fe(3+). Asp-318 lines the Zn(2+) pocket. Asn-320 and Gly-322 together coordinate N-formimidoyl-L-glutamate. Ser-323 lines the 4-imidazolone-5-propanoate pocket.

It belongs to the metallo-dependent hydrolases superfamily. HutI family. Zn(2+) serves as cofactor. It depends on Fe(3+) as a cofactor.

Its subcellular location is the cytoplasm. The enzyme catalyses 4-imidazolone-5-propanoate + H2O = N-formimidoyl-L-glutamate. It functions in the pathway amino-acid degradation; L-histidine degradation into L-glutamate; N-formimidoyl-L-glutamate from L-histidine: step 3/3. Catalyzes the hydrolytic cleavage of the carbon-nitrogen bond in imidazolone-5-propanoate to yield N-formimidoyl-L-glutamate. It is the third step in the universal histidine degradation pathway. In Bradyrhizobium diazoefficiens (strain JCM 10833 / BCRC 13528 / IAM 13628 / NBRC 14792 / USDA 110), this protein is Imidazolonepropionase.